The primary structure comprises 70 residues: Protein SlyX homolog (70 aa).

The protein belongs to the SlyX family.

The protein is Protein SlyX homolog of Shewanella piezotolerans (strain WP3 / JCM 13877).